Consider the following 187-residue polypeptide: NADH-quinone oxidoreductase subunit B (187 aa).

Over residues 1 to 10 (MTADHNRALH) the composition is skewed to basic and acidic residues. The segment at 1-22 (MTADHNRALHDAPTARGGEVRQ) is disordered. [4Fe-4S] cluster is bound by residues cysteine 66, cysteine 67, cysteine 131, and cysteine 161.

Belongs to the complex I 20 kDa subunit family. In terms of assembly, NDH-1 is composed of 14 different subunits. Subunits NuoB, C, D, E, F, and G constitute the peripheral sector of the complex. It depends on [4Fe-4S] cluster as a cofactor.

The protein resides in the cell inner membrane. It carries out the reaction a quinone + NADH + 5 H(+)(in) = a quinol + NAD(+) + 4 H(+)(out). NDH-1 shuttles electrons from NADH, via FMN and iron-sulfur (Fe-S) centers, to quinones in the respiratory chain. Couples the redox reaction to proton translocation (for every two electrons transferred, four hydrogen ions are translocated across the cytoplasmic membrane), and thus conserves the redox energy in a proton gradient. The protein is NADH-quinone oxidoreductase subunit B of Erythrobacter litoralis (strain HTCC2594).